A 534-amino-acid chain; its full sequence is Anther-specific proline-rich protein APG (534 aa).

Positions 1 to 35 (MKRSSLVDSCSYSRIFRSIFCLLSFCIFFLTTTNA) are cleaved as a signal peptide. The span at 59–196 (NPPTPDPSPK…SPKPAPSPPK (138 aa)) shows a compositional bias: pro residues. The tract at residues 59 to 202 (NPPTPDPSPK…SPPKPENKTI (144 aa)) is disordered. Catalysis depends on Ser-211, which acts as the Nucleophile. Residues Asp-508 and His-511 contribute to the active site.

Belongs to the 'GDSL' lipolytic enzyme family. In terms of tissue distribution, found in sporophytic and gametophytic cell types in the anther, only in male fertile plants.

In Arabidopsis thaliana (Mouse-ear cress), this protein is Anther-specific proline-rich protein APG (APG).